Reading from the N-terminus, the 339-residue chain is tRNA pseudouridine synthase B (339 aa).

Residue D40 is the Nucleophile of the active site. Residues 262-307 (FRRLSKFAYREEFEENTERSTAAYTLVREDANTGLTYKLPLEVELS) form the RPE1 insert domain.

This sequence belongs to the pseudouridine synthase TruB family. Type 1 subfamily.

The enzyme catalyses uridine(55) in tRNA = pseudouridine(55) in tRNA. Its function is as follows. Responsible for synthesis of pseudouridine from uracil-55 in the psi GC loop of transfer RNAs. This chain is tRNA pseudouridine synthase B, found in Rickettsia felis (strain ATCC VR-1525 / URRWXCal2) (Rickettsia azadi).